The sequence spans 132 residues: Interleukin-4 (132 aa).

An N-terminal signal peptide occupies residues 1 to 24 (MGLTSQLIPTLVCLLALTSTFVHG). Residues Asn-28, Asn-45, Asn-62, Asn-83, Asn-95, and Asn-101 are each glycosylated (N-linked (GlcNAc...) asparagine). Cystine bridges form between Cys-48–Cys-84 and Cys-70–Cys-104.

The protein belongs to the IL-4/IL-13 family.

The protein localises to the secreted. Participates in at least several B-cell activation processes as well as of other cell types. It is a costimulator of DNA-synthesis. It induces the expression of class II MHC molecules on resting B-cells. It enhances both secretion and cell surface expression of IgE and IgG1. It also regulates the expression of the low affinity Fc receptor for IgE (CD23) on both lymphocytes and monocytes. Positively regulates IL31RA expression in macrophages. Stimulates autophagy in dendritic cells by interfering with mTORC1 signaling and through the induction of RUFY4. The polypeptide is Interleukin-4 (IL4) (Canis lupus familiaris (Dog)).